We begin with the raw amino-acid sequence, 559 residues long: Glutamine--tRNA ligase (559 aa).

The 'HIGH' region motif lies at 44-54 (PEPNGYLHIGH). Residues 45–47 (EPN) and 51–57 (HIGHAKS) each bind ATP. The L-glutamine site is built by D77 and Y222. ATP is bound by residues T241 and 272 to 273 (RL). The short motif at 279-283 (LTSKR) is the 'KMSKS' region element.

This sequence belongs to the class-I aminoacyl-tRNA synthetase family. Monomer.

The protein localises to the cytoplasm. The catalysed reaction is tRNA(Gln) + L-glutamine + ATP = L-glutaminyl-tRNA(Gln) + AMP + diphosphate. This chain is Glutamine--tRNA ligase, found in Pasteurella multocida (strain Pm70).